The following is a 787-amino-acid chain: Protein PAT1 homolog 2 (787 aa).

5 disordered regions span residues 94-120 (KHLG…WTQD), 134-221 (EQVQ…NASP), 338-374 (VREH…GLQF), 411-445 (LAKK…QQPQ), and 765-787 (VSES…FVRG). Residues 105–120 (GSFSRESSTATDWTQD) show a composition bias toward polar residues. The span at 142-153 (SSQPQSSPNSNS) shows a compositional bias: low complexity. Composition is skewed to polar residues over residues 154–171 (LYRT…QHYS), 180–198 (STFT…SSPS), and 208–221 (GGSQ…NASP). A phosphoserine mark is found at Ser-184 and Ser-192. Residues 341–353 (HKHKSSHRSRKNR) show a composition bias toward basic residues. Composition is skewed to polar residues over residues 355-373 (GISQ…SGLQ) and 436-445 (SRNSSDQQPQ).

Its function is as follows. Activator of mRNA decapping. Involved in mRNA decay via decapping. The sequence is that of Protein PAT1 homolog 2 from Arabidopsis thaliana (Mouse-ear cress).